The following is a 423-amino-acid chain: MALRVTRNTKINTENKAKVSMAGAKRVPVAVAASKPLLRSRTALGDIGNKVSEQSRIPLKKETKKLGSGTVTVKALPKPVDKVPVCEPEVELDEPEPEPVMEVKHSPEPILVDTPSPSPMETSGCAPAEEYLCQAFSDVILAVSDVDADDGGDPNLCSEYVKDIYAYLRQLEEEQSVRPKYLLGREVTGNMRAILIDWLIQVQMKFRLLQETMYMTVSIIDRFMQDSCVPKKMLQLVGVTAMFIASKYEEMYPPEIGDFAFVTNNTYTKHQIRQMEMKILRVLNFSLGRPLPLHFLRRASKIGEVDVEQHTLAKYLMELSMLDYDMVHFAPSQIAAGAFCLALKILDNGEWTPTLQHYLSHTEESLLPVMQHLAKNIVMVNRGLTKHMTIKNKYATSKHAKISTLAQLNCTLVQNLSKAVTKA.

Phosphoserine; by CDK1 is present on S116. S118 is modified (phosphoserine). S123 is subject to Phosphoserine; by PLK1. At S137 the chain carries Phosphoserine. 2 interaction with CDK2 regions span residues 159–167 (EYVKDIYAY) and 248–251 (YEEM). Phosphothreonine is present on T311.

It belongs to the cyclin family. Cyclin AB subfamily. As to quaternary structure, interacts with the CDC2 protein kinase to form a serine/threonine kinase holoenzyme complex also known as maturation promoting factor (MPF). The cyclin subunit imparts substrate specificity to the complex. Binds HEI10. Interacts with catalytically active RALBP1 and CDC2 during mitosis to form an endocytotic complex during interphase. Interacts with CCNF; interaction is required for nuclear localization. Interacts with CDK5RAP3. Interacts with RFPL4A and UBE2A. Interacts with INCA1. In terms of processing, ubiquitinated by the SCF(NIPA) complex during interphase, leading to its destruction. Deubiquitinated by USP22 during G2/M phase. Post-translationally, phosphorylated by PLK1 at Ser-123 on centrosomes during prophase: phosphorylation by PLK1 does not cause nuclear import. Phosphorylation at Ser-137 was also reported to be mediated by PLK1 but Ser-123 seems to be the primary phosphorylation site.

Its subcellular location is the cytoplasm. The protein localises to the nucleus. It is found in the cytoskeleton. It localises to the microtubule organizing center. The protein resides in the centrosome. Its function is as follows. Essential for the control of the cell cycle at the G2/M (mitosis) transition. This is G2/mitotic-specific cyclin-B1 (Ccnb1) from Rattus norvegicus (Rat).